The following is a 340-amino-acid chain: 4-hydroxy-3-methylbut-2-enyl diphosphate reductase (340 aa).

Residue cysteine 13 coordinates [4Fe-4S] cluster. Residues histidine 42 and histidine 75 each coordinate (2E)-4-hydroxy-3-methylbut-2-enyl diphosphate. The dimethylallyl diphosphate site is built by histidine 42 and histidine 75. Positions 42 and 75 each coordinate isopentenyl diphosphate. Cysteine 97 provides a ligand contact to [4Fe-4S] cluster. Histidine 125 provides a ligand contact to (2E)-4-hydroxy-3-methylbut-2-enyl diphosphate. Histidine 125 is a binding site for dimethylallyl diphosphate. Residue histidine 125 coordinates isopentenyl diphosphate. The active-site Proton donor is the glutamate 127. Residue threonine 165 participates in (2E)-4-hydroxy-3-methylbut-2-enyl diphosphate binding. Cysteine 195 contributes to the [4Fe-4S] cluster binding site. (2E)-4-hydroxy-3-methylbut-2-enyl diphosphate-binding residues include serine 223, serine 224, asparagine 225, and serine 267. Dimethylallyl diphosphate is bound by residues serine 223, serine 224, asparagine 225, and serine 267. 4 residues coordinate isopentenyl diphosphate: serine 223, serine 224, asparagine 225, and serine 267. The tract at residues 317 to 340 (NNLDNKTAASEEADSLSNDTEQEA) is disordered. Positions 331–340 (SLSNDTEQEA) are enriched in polar residues.

This sequence belongs to the IspH family. [4Fe-4S] cluster is required as a cofactor.

It catalyses the reaction isopentenyl diphosphate + 2 oxidized [2Fe-2S]-[ferredoxin] + H2O = (2E)-4-hydroxy-3-methylbut-2-enyl diphosphate + 2 reduced [2Fe-2S]-[ferredoxin] + 2 H(+). The enzyme catalyses dimethylallyl diphosphate + 2 oxidized [2Fe-2S]-[ferredoxin] + H2O = (2E)-4-hydroxy-3-methylbut-2-enyl diphosphate + 2 reduced [2Fe-2S]-[ferredoxin] + 2 H(+). It functions in the pathway isoprenoid biosynthesis; dimethylallyl diphosphate biosynthesis; dimethylallyl diphosphate from (2E)-4-hydroxy-3-methylbutenyl diphosphate: step 1/1. The protein operates within isoprenoid biosynthesis; isopentenyl diphosphate biosynthesis via DXP pathway; isopentenyl diphosphate from 1-deoxy-D-xylulose 5-phosphate: step 6/6. In terms of biological role, catalyzes the conversion of 1-hydroxy-2-methyl-2-(E)-butenyl 4-diphosphate (HMBPP) into a mixture of isopentenyl diphosphate (IPP) and dimethylallyl diphosphate (DMAPP). Acts in the terminal step of the DOXP/MEP pathway for isoprenoid precursor biosynthesis. The chain is 4-hydroxy-3-methylbut-2-enyl diphosphate reductase from Zymomonas mobilis subsp. mobilis (strain ATCC 31821 / ZM4 / CP4).